Reading from the N-terminus, the 131-residue chain is uncharacterized protein (131 aa).

This is an uncharacterized protein from Aquifex aeolicus (strain VF5).